A 311-amino-acid polypeptide reads, in one-letter code: MASYASEVKKELTSLEVHPEHAKAELAAFLRMNGVLNLHDHQFSLDITTENPAIARRIFKLIKVAYGIEPLLIVSRKMKLKKNNQYLVRLNQQVQEILENLQIWDTEKGLVTRIPKRIMSSREGAMSYLRGAFLAGGSVNNPETSRYHLEIYSTYEDHNEDLAKLMNEYFYLNAKMTKRRRGYIVYLKEAEKIGDFLHIVGALNAMLNFEDLRIMRDMRNSVNRLVNCDTANMKKTASASAKQVEDIQLIQKEKGLDDLSEKLQILANFRLAHPELTLKEVADQIPDGPISKSGVNHRFKKLHEIAESLRE.

The segment at residues 277–311 (TLKEVADQIPDGPISKSGVNHRFKKLHEIAESLRE) is a DNA-binding region (H-T-H motif).

The protein belongs to the WhiA family.

Its function is as follows. Involved in cell division and chromosome segregation. This Lactobacillus acidophilus (strain ATCC 700396 / NCK56 / N2 / NCFM) protein is Probable cell division protein WhiA.